The chain runs to 300 residues: Spermine synthase SPE4 (300 aa).

Ser5 carries the phosphoserine modification. The PABS domain maps to 12 to 255 (DGWFREINDK…GQLGLIVCSN (244 aa)). S-adenosyl 3-(methylsulfanyl)propylamine contacts are provided by residues Gln44, Asp99, Glu119, and 151–152 (DG). The Proton acceptor role is filled by Asp174. Residue Asp177 coordinates spermidine.

It belongs to the spermidine/spermine synthase family.

It carries out the reaction S-adenosyl 3-(methylsulfanyl)propylamine + spermidine = spermine + S-methyl-5'-thioadenosine + H(+). It functions in the pathway amine and polyamine biosynthesis; spermine biosynthesis; spermine from spermidine: step 1/1. This is Spermine synthase SPE4 (SPE4) from Saccharomyces cerevisiae (strain ATCC 204508 / S288c) (Baker's yeast).